A 162-amino-acid polypeptide reads, in one-letter code: uncharacterized protein (162 aa).

The protein belongs to the A.longa ORF167/ORF288 family.

It is found in the plastid. This is an uncharacterized protein from Euglena longa (Euglenophycean alga).